Reading from the N-terminus, the 45-residue chain is FKBP-type peptidyl-prolyl cis-trans isomerase, chloroplastic (45 aa).

The protein belongs to the FKBP-type PPIase family. As to expression, expressed in leaves, but not in roots.

It is found in the plastid. The protein resides in the chloroplast thylakoid lumen. It catalyses the reaction [protein]-peptidylproline (omega=180) = [protein]-peptidylproline (omega=0). Its function is as follows. PPIases accelerate the folding of proteins. It catalyzes the cis-trans isomerization of proline imidic peptide bonds in oligopeptides. This is FKBP-type peptidyl-prolyl cis-trans isomerase, chloroplastic from Vicia faba (Broad bean).